The sequence spans 196 residues: Peptide deformylase (196 aa).

Fe cation-binding residues include Cys-103 and His-145. Glu-146 is an active-site residue. His-149 contacts Fe cation.

Belongs to the polypeptide deformylase family. Fe(2+) serves as cofactor.

The enzyme catalyses N-terminal N-formyl-L-methionyl-[peptide] + H2O = N-terminal L-methionyl-[peptide] + formate. Removes the formyl group from the N-terminal Met of newly synthesized proteins. Requires at least a dipeptide for an efficient rate of reaction. N-terminal L-methionine is a prerequisite for activity but the enzyme has broad specificity at other positions. The polypeptide is Peptide deformylase (Rhodococcus opacus (strain B4)).